Consider the following 313-residue polypeptide: Pyrimidine-specific ribonucleoside hydrolase RihB (313 aa).

Asp11 functions as the Proton acceptor in the catalytic mechanism. Positions 11, 16, and 124 each coordinate Ca(2+). The substrate site is built by Gln227 and His239. Asp240 serves as a coordination point for Ca(2+).

It belongs to the IUNH family. RihB subfamily. In terms of assembly, homotetramer. Ca(2+) serves as cofactor.

The catalysed reaction is a pyrimidine ribonucleoside + H2O = a pyrimidine nucleobase + D-ribose. In terms of biological role, hydrolyzes cytidine or uridine to ribose and cytosine or uracil, respectively. Has a clear preference for cytidine over uridine. Strictly specific for ribonucleosides. This is Pyrimidine-specific ribonucleoside hydrolase RihB from Escherichia coli O157:H7.